Consider the following 520-residue polypeptide: CUGBP Elav-like family member 4 (520 aa).

RRM domains are found at residues 47–128 (IKLF…PADS), 135–215 (RKLF…FADT), and 435–513 (CNLF…LKRP).

This sequence belongs to the CELF/BRUNOL family.

It localises to the nucleus. The protein resides in the cytoplasm. In terms of biological role, RNA-binding protein that may be implicated in the regulation of pre-mRNA alternative splicing. The chain is CUGBP Elav-like family member 4 (celf4) from Danio rerio (Zebrafish).